Consider the following 1277-residue polypeptide: Clustered mitochondria protein 1 (1277 aa).

Disordered stretches follow at residues 19–39 and 148–176; these read LPKEDNHSHNTKHLKKTQSSK and LPLGPIKERSKQEEKDEKSDPEEKKNTFK. The segment covering 27 to 36 has biased composition (basic residues); sequence HNTKHLKKTQ. A compositionally biased stretch (basic and acidic residues) spans 153-176; the sequence is IKERSKQEEKDEKSDPEEKKNTFK. In terms of domain architecture, Clu spans 339–596; that stretch reads PPNNPDYLRL…NTYPLDINFA (258 aa). 3 TPR repeats span residues 704 to 738, 1020 to 1053, and 1148 to 1181; these read GINMRYLGKIIELSQKELDSQIVHYEQNLKAVEQD, AEKYLSLSAIYNKLALYPEAIAFCRKACTIYERV, and GYTESRLGNLFAALKDFHRALEHITVTQGIFTKQ. Positions 1212–1277 are disordered; sequence LAQDQMSTTG…TNNKKKHGKK (66 aa). A compositionally biased stretch (basic and acidic residues) spans 1235 to 1249; sequence KKDDVKPELANKSVD. Ser1247 is subject to Phosphoserine. Over residues 1264-1277 the composition is skewed to basic residues; it reads SKNKTNNKKKHGKK.

This sequence belongs to the CLU family. As to quaternary structure, may associate with the eukaryotic translation initiation factor 3 (eIF-3) complex. Associates with the 80S ribosome.

The protein resides in the cytoplasm. In terms of biological role, mRNA-binding protein involved in proper cytoplasmic distribution of mitochondria. The protein is Clustered mitochondria protein 1 of Saccharomyces cerevisiae (strain ATCC 204508 / S288c) (Baker's yeast).